Here is a 295-residue protein sequence, read N- to C-terminus: Threonine/homoserine exporter RhtA (295 aa).

Over 1-9 (MPGSLRKMP) the chain is Cytoplasmic. Residues 10 to 30 (VWLPIVILLVAMASIQGGASL) form a helical membrane-spanning segment. The region spanning 30–135 (LAKSLFPLVG…VLAVLGLWFL (106 aa)) is the EamA 1 domain. Over 31–38 (AKSLFPLV) the chain is Periplasmic. A helical transmembrane segment spans residues 39 to 59 (GAPGVTALRLALGTLILIAFF). The Cytoplasmic segment spans residues 60–71 (KPWRLRFAKEQR). Residues 72–92 (LPLLFYGVSLGGMNYLFYLSI) form a helical membrane-spanning segment. A topological domain (periplasmic) is located at residue glutamine 93. A helical membrane pass occupies residues 94 to 114 (TVPLGIAVALEFTGPLAVALF). Topologically, residues 115–118 (SSRR) are cytoplasmic. Residues 119-139 (PVDFVWVVLAVLGLWFLLPLG) form a helical membrane-spanning segment. Over 140–146 (QDVSHVD) the chain is Periplasmic. A helical transmembrane segment spans residues 147–167 (LTGCALALGAGACWAIYILSG). The region spanning 159-278 (CWAIYILSGQ…LGAIIAASMG (120 aa)) is the EamA 2 domain. The Cytoplasmic portion of the chain corresponds to 168–175 (QRAGAEHG). The chain crosses the membrane as a helical span at residues 176-196 (PATVAIGSLIAALIFVPIGAL). At 197–200 (QAGE) the chain is on the periplasmic side. Residues 201–221 (ALWHWSVIPLGLAVAILSTAL) form a helical membrane-spanning segment. Residues 222–237 (PYSLEMIALTRLPTRT) lie on the Cytoplasmic side of the membrane. The chain crosses the membrane as a helical span at residues 238–258 (FGTLMSMEPALAAVSGMIFLG). Residues 259–262 (ETLT) lie on the Periplasmic side of the membrane. A helical membrane pass occupies residues 263–283 (PIQLLALGAIIAASMGSTLTV). The Cytoplasmic portion of the chain corresponds to 284–295 (RKESKIKELDIN).

Belongs to the drug/metabolite transporter (DMT) superfamily. 10 TMS drug/metabolite exporter (DME) (TC 2.A.7.3) family.

Its subcellular location is the cell inner membrane. Its function is as follows. Involved in the efflux of threonine and homoserine. The chain is Threonine/homoserine exporter RhtA (rhtA) from Escherichia coli O157:H7.